Here is a 394-residue protein sequence, read N- to C-terminus: Junctional adhesion molecule-like (394 aa).

Residues 1-19 (MFCPLKLILLPVLLDYSLG) form the signal peptide. 2 consecutive Ig-like V-type domains span residues 20–132 (LNDL…KAVV) and 137–250 (PEEP…IVLH). Topologically, residues 20-275 (LNDLNVSPPE…RPLVLGGNQL (256 aa)) are extracellular. 2 disulfides stabilise this stretch: cysteine 42–cysteine 116 and cysteine 155–cysteine 234. N-linked (GlcNAc...) asparagine glycosylation is found at asparagine 76 and asparagine 231. The helical transmembrane segment at 276–296 (VIIVGIVCATILLLPVLILIV) threads the bilayer. The Cytoplasmic portion of the chain corresponds to 297 to 394 (KKTCGNKSSV…GGMPKTQQAF (98 aa)). Residues 369-394 (PSLRSDRNNSLEKKSGGGMPKTQQAF) are disordered. Over residues 372–383 (RSDRNNSLEKKS) the composition is skewed to basic and acidic residues.

The protein belongs to the immunoglobulin superfamily. Homodimer; active form in leukocyte-endothelial cell adhesion. Interacts (homodimeric form) with CXADR. Interacts (via cytoplasmic domain) with the PI3 kinase; upon CXADR-binding. Interacts with ITGA4 and ITGB1; integrin alpha-4/beta-1 may regulate leukocyte to endothelial cells adhesion by controlling JAML homodimerization. Expression is restricted to the hematopoietic tissues with the exception of liver. Expressed in fetal liver, spleen and thymus. Preferentially expressed by mature leukocytes (at protein level).

The protein resides in the cell membrane. It is found in the cell junction. Transmembrane protein of the plasma membrane of leukocytes that control their migration and activation through interaction with CXADR, a plasma membrane receptor found on adjacent epithelial and endothelial cells. The interaction between both receptors mediates the activation of gamma-delta T-cells, a subpopulation of T-cells residing in epithelia and involved in tissue homeostasis and repair. Upon epithelial CXADR-binding, JAML induces downstream cell signaling events in gamma-delta T-cells through PI3-kinase and MAP kinases. It results in proliferation and production of cytokines and growth factors by T-cells that in turn stimulate epithelial tissues repair. It also controls the transmigration of leukocytes within epithelial and endothelial tissues through adhesive interactions with epithelial and endothelial CXADR. This is Junctional adhesion molecule-like from Homo sapiens (Human).